Reading from the N-terminus, the 130-residue chain is Cuticle protein 14 isoform b (130 aa).

Residues 24-90 enclose the Chitin-binding type R&amp;R domain; that stretch reads IGNYNFGYNE…NVHTNEPGTD (67 aa).

The polypeptide is Cuticle protein 14 isoform b (Limulus polyphemus (Atlantic horseshoe crab)).